Here is a 182-residue protein sequence, read N- to C-terminus: Small ribosomal subunit protein uS4c (182 aa).

Positions 82-143 constitute an S4 RNA-binding domain; sequence MRLDNILFRL…KERSKVLIQN (62 aa).

Belongs to the universal ribosomal protein uS4 family. As to quaternary structure, part of the 30S ribosomal subunit. Contacts protein S5. The interaction surface between S4 and S5 is involved in control of translational fidelity.

The protein localises to the plastid. It localises to the chloroplast. Its function is as follows. One of the primary rRNA binding proteins, it binds directly to 16S rRNA where it nucleates assembly of the body of the 30S subunit. With S5 and S12 plays an important role in translational accuracy. This chain is Small ribosomal subunit protein uS4c (rps4), found in Neomarica sp. (strain Lejeune 1997).